The chain runs to 192 residues: MASLTTLKNTAIVTGSFLSGAMITLSTITVPVLLETSTHPPQLLHQWVRTYHYGHISLPTISIATAILYFYIAAYQGAREQPWRKAALVGFLTIVMVPFTWIVMSSTNGMLFGLEAGNRDHSQFFEQGANRSGLKGANSSQSHGLGNVSVGIGVEMATLEGVRELLVRWKWMHLVRSLFPLMAAVLGVGICV.

A run of 3 helical transmembrane segments spans residues Ile-12 to Val-32, Gly-54 to Ala-74, and Ala-86 to Ser-106. Asn-130, Asn-138, and Asn-147 each carry an N-linked (GlcNAc...) asparagine glycan. Residues Met-172 to Val-192 form a helical membrane-spanning segment.

The protein belongs to the anthrone oxygenase family.

The protein resides in the membrane. The enzyme catalyses emodin anthrone + O2 = emodin + H2O + H(+). The protein operates within secondary metabolite biosynthesis. Its function is as follows. Anthrone oxygenase; part of the gene cluster that mediates the biosynthesis of monodictyphenone, a prenyl xanthone derivative. The pathway begins with the synthesis of atrochrysone thioester by the polyketide synthase (PKS) mdpG. The atrochrysone carboxyl ACP thioesterase mdpF then breaks the thioester bond and releases the atrochrysone carboxylic acid from mdpG. The atrochrysone carboxylic acid is then converted to atrochrysone which is further transformed into emodin anthrone by mdpH-1 and mdpH-2. Emodin is further modified to yield monodictyphenone via several steps involving mdpB, mdpC mdpJ, mdpK and mdpL. These enzymes with xptA, xptB and xptC are also proposed to be involved in the synthesis of shamixanthone from emodin. Especially, direct reduction of emodin by the short chain dehydrogenase mdpC followed by dehydration catalyzed by the scytalone dehydratase-like protein mdpB gives loss of oxygen and formation of chrysophanol intermediate in two simple steps. In Emericella nidulans (strain FGSC A4 / ATCC 38163 / CBS 112.46 / NRRL 194 / M139) (Aspergillus nidulans), this protein is Anthrone oxygenase.